We begin with the raw amino-acid sequence, 326 residues long: Undecaprenyl-phosphate 4-deoxy-4-formamido-L-arabinose transferase (326 aa).

2 helical membrane-spanning segments follow: residues 235–255 (MLSV…LLLI) and 270–290 (VFML…GMGL).

It belongs to the glycosyltransferase 2 family.

The protein localises to the cell inner membrane. The catalysed reaction is UDP-4-deoxy-4-formamido-beta-L-arabinose + di-trans,octa-cis-undecaprenyl phosphate = 4-deoxy-4-formamido-alpha-L-arabinopyranosyl di-trans,octa-cis-undecaprenyl phosphate + UDP. Its pathway is glycolipid biosynthesis; 4-amino-4-deoxy-alpha-L-arabinose undecaprenyl phosphate biosynthesis; 4-amino-4-deoxy-alpha-L-arabinose undecaprenyl phosphate from UDP-4-deoxy-4-formamido-beta-L-arabinose and undecaprenyl phosphate: step 1/2. It participates in bacterial outer membrane biogenesis; lipopolysaccharide biosynthesis. Its function is as follows. Catalyzes the transfer of 4-deoxy-4-formamido-L-arabinose from UDP to undecaprenyl phosphate. The modified arabinose is attached to lipid A and is required for resistance to polymyxin and cationic antimicrobial peptides. This is Undecaprenyl-phosphate 4-deoxy-4-formamido-L-arabinose transferase from Sodalis glossinidius (strain morsitans).